Here is a 344-residue protein sequence, read N- to C-terminus: Membrane progestin receptor delta (344 aa).

Over 1–51 (MLSLKLPQLLQVHQVPRVFWEDGIMSGYRRPTSSALDCVLSSFQMTNETVN) the chain is Cytoplasmic. Residues 52–72 (IWTHFLPTWYFLWRLLALAGG) traverse the membrane as a helical segment. The Extracellular portion of the chain corresponds to 73–83 (PGFRAEPYHWP). The helical transmembrane segment at 84–104 (LLVFLLPACLYPFASCCAHTF) threads the bilayer. Residues 105 to 113 (SSMSPRMRH) are Cytoplasmic-facing. The helical transmembrane segment at 114-134 (ICYFLDYGALSLYSLGCAFPY) threads the bilayer. Over 135-147 (AAYSMPASWLHGH) the chain is Extracellular. A helical transmembrane segment spans residues 148 to 168 (LHQFFVPAAALNSFLCTGLSC). Residues 169 to 217 (YSRFLELESPGLSKVLRTGAFAYPFLFDNLPLFYRLGLCWGRGHGCGQE) are Cytoplasmic-facing. A helical membrane pass occupies residues 218–238 (ALSTSHGYHLFCALLTGFLFA). At 239-258 (SHLPERLAPGRFDYIGHSHQ) the chain is on the extracellular side. The chain crosses the membrane as a helical span at residues 259–279 (LFHICAVLGTHFQLEAVLADM). The Cytoplasmic segment spans residues 280 to 292 (GSRRAWLATQEPA). Residues 293–313 (LGLAGTVATLVLAAAGNLLII) traverse the membrane as a helical segment. Residues 314 to 344 (AAFTATLLRAPSTCPLLQGGPLEGGTQAKQQ) are Extracellular-facing.

Belongs to the ADIPOR family. As to quaternary structure, homodimer. Brain specific. Highly expressed in the hypothalamus, also expressed in forebrain, amygdala, corpus callosum and spinal cord.

The protein localises to the cell membrane. Plasma membrane progesterone (P4) receptor coupled to G proteins. Seems to act through a G(s) mediated pathway. Involved in neurosteroid inhibition of apoptosis. May be involved in regulating rapid P4 signaling in the nervous system. Also binds dehydroepiandrosterone (DHEA), pregnanolone, pregnenolone and allopregnanolone. This is Membrane progestin receptor delta from Homo sapiens (Human).